The sequence spans 407 residues: Peptidase T (407 aa).

Histidine 82 contacts Zn(2+). Residue aspartate 84 is part of the active site. Position 143 (aspartate 143) interacts with Zn(2+). Catalysis depends on glutamate 177, which acts as the Proton acceptor. Residues glutamate 178, aspartate 200, and histidine 382 each contribute to the Zn(2+) site.

This sequence belongs to the peptidase M20B family. The cofactor is Zn(2+).

It is found in the cytoplasm. The catalysed reaction is Release of the N-terminal residue from a tripeptide.. Its function is as follows. Cleaves the N-terminal amino acid of tripeptides. This is Peptidase T from Streptococcus pyogenes serotype M6 (strain ATCC BAA-946 / MGAS10394).